Here is a 346-residue protein sequence, read N- to C-terminus: FAS-associated factor 2 (346 aa).

Lys-68 carries the post-translational modification N6-acetyllysine. Residues 176-251 (SERLEREERN…EEKERKLECL (76 aa)) adopt a coiled-coil conformation. The disordered stretch occupies residues 200–262 (ASLRADQEKE…PEPSPDDPDS (63 aa)). Residues 204–249 (ADQEKERKKREERERKRRKEEEVQQQKLAEERRRQNLQEEKERKLE) show a composition bias toward basic and acidic residues. The UBX domain maps to 258 to 340 (DDPDSVKIIF…GLSHTEVLFV (83 aa)).

As to quaternary structure, identified in a complex that contains SEL1L, OS9, FAF2/UBXD8, UBE2J1/UBC6E and AUP1. Interacts with YOD1. Interacts (via N-terminus) with UBQLN2 (via C-terminus). Interacts with PNPLA2 and UBAC2. Interacts with ZFAND2B; probably through VCP. Interacts with LMBR1L.

It is found in the cytoplasm. It localises to the lipid droplet. The protein resides in the endoplasmic reticulum. In terms of biological role, plays an important role in endoplasmic reticulum-associated degradation (ERAD) that mediates ubiquitin-dependent degradation of misfolded endoplasmic reticulum proteins. By controlling the steady-state expression of the IGF1R receptor, indirectly regulates the insulin-like growth factor receptor signaling pathway. Involved in inhibition of lipid droplet degradation by binding to phospholipase PNPL2 and inhibiting its activity by promoting dissociation of PNPL2 from its endogenous activator, ABHD5 which inhibits the rate of triacylglycerol hydrolysis. Involved in stress granule disassembly: associates with ubiquitinated G3BP1 in response to heat shock, thereby promoting interaction between ubiquitinated G3BP1 and VCP, followed by G3BP1 extraction from stress granules and stress granule disassembly. The polypeptide is FAS-associated factor 2 (Faf2) (Rattus norvegicus (Rat)).